The chain runs to 464 residues: Adenosylhomocysteinase (464 aa).

T56, D131, and E190 together coordinate substrate. 191–193 provides a ligand contact to NAD(+); sequence TTT. Substrate is bound by residues K220 and D224. Residues N225, 254-259, E277, N312, 333-335, and N378 contribute to the NAD(+) site; these read GFGDVG and IGH.

This sequence belongs to the adenosylhomocysteinase family. Requires NAD(+) as cofactor.

It localises to the cytoplasm. It carries out the reaction S-adenosyl-L-homocysteine + H2O = L-homocysteine + adenosine. It participates in amino-acid biosynthesis; L-homocysteine biosynthesis; L-homocysteine from S-adenosyl-L-homocysteine: step 1/1. May play a key role in the regulation of the intracellular concentration of adenosylhomocysteine. In Zymomonas mobilis subsp. mobilis (strain ATCC 31821 / ZM4 / CP4), this protein is Adenosylhomocysteinase.